The primary structure comprises 1225 residues: Hyphally regulated cell wall protein 4 (1225 aa).

Positions 1–20 are cleaved as a signal peptide; the sequence is MFSYSQAIRFIIFLLPICLT. Residues Asn-97, Asn-200, Asn-488, Asn-595, Asn-634, and Asn-694 are each glycosylated (N-linked (GlcNAc...) asparagine). The interval 832-852 is disordered; sequence DLDLPDDTTFTPSQSSSTTVP. Positions 838-852 are enriched in low complexity; sequence DTTFTPSQSSSTTVP. N-linked (GlcNAc...) asparagine glycosylation is found at Asn-933 and Asn-1035. The tract at residues 1049–1114 is disordered; it reads AYTQQDASTQ…NSHFEGTFIS (66 aa). 4 N-linked (GlcNAc...) asparagine glycosylation sites follow: Asn-1133, Asn-1150, Asn-1182, and Asn-1193. Ser-1195 carries GPI-anchor amidated serine lipidation. A propeptide spans 1196–1225 (removed in mature form); that stretch reads GLISKSESVVLLIRPVMIFVFLAICVVIML.

This sequence belongs to the HYR1/IFF family. Post-translationally, the GPI-anchor is attached to the protein in the endoplasmic reticulum and serves to target the protein to the cell surface. There, the glucosamine-inositol phospholipid moiety is cleaved off and the GPI-modified mannoprotein is covalently attached via its lipidless GPI glycan remnant to the 1,6-beta-glucan of the outer cell wall layer.

The protein localises to the secreted. The protein resides in the cell wall. It is found in the membrane. Functionally, GPI-anchored cell wall protein involved in cell wall organization, hyphal growth, as well as in host-fungal interaction and virulence. The sequence is that of Hyphally regulated cell wall protein 4 (HYR4) from Candida albicans (strain SC5314 / ATCC MYA-2876) (Yeast).